Here is a 293-residue protein sequence, read N- to C-terminus: Pseudouridine-5'-phosphate glycosidase (293 aa).

Catalysis depends on glutamate 21, which acts as the Proton donor. 2 residues coordinate substrate: lysine 81 and valine 101. Aspartate 130 is a Mn(2+) binding site. 132 to 134 (SQD) lines the substrate pocket. The Nucleophile role is filled by lysine 151.

Belongs to the pseudouridine-5'-phosphate glycosidase family. Homotrimer. It depends on Mn(2+) as a cofactor.

The enzyme catalyses D-ribose 5-phosphate + uracil = psi-UMP + H2O. In terms of biological role, catalyzes the reversible cleavage of pseudouridine 5'-phosphate (PsiMP) to ribose 5-phosphate and uracil. Functions biologically in the cleavage direction, as part of a pseudouridine degradation pathway. The sequence is that of Pseudouridine-5'-phosphate glycosidase from Thermosipho africanus (strain TCF52B).